A 289-amino-acid polypeptide reads, in one-letter code: Nucleotide-binding protein Franean1_2060 (289 aa).

Residue 13–20 participates in ATP binding; sequence GLSGAGRS. Residue 64-67 participates in GTP binding; sequence DVRG.

The protein belongs to the RapZ-like family.

Displays ATPase and GTPase activities. The protein is Nucleotide-binding protein Franean1_2060 of Parafrankia sp. (strain EAN1pec).